The sequence spans 318 residues: uncharacterized protein (318 aa).

This sequence to A.aeolicus AA07 and AA11.

This is an uncharacterized protein from Aquifex aeolicus (strain VF5).